Here is a 1449-residue protein sequence, read N- to C-terminus: Spike glycoprotein (1449 aa).

The N-terminal stretch at 1–28 (MKKLFVVLVVMPLIYGDNFPCSKLTNRT) is a signal peptide. 2 S1 regions span residues 17 to 776 (DNFP…FYYY) and 29 to 776 (IGNH…FYYY). At 29 to 1390 (IGNHWNLIET…NRIETYVKWP (1362 aa)) the chain is on the virion surface side. Positions 657–801 (VIYEEGDNIV…DSNDVDCEPV (145 aa)) are interaction with host ANPEP. The S2 stretch occupies residues 777-1449 (SIYNYTNDMT…YEPIEKVHIH (673 aa)). Residues 1022-1043 (AGGITLGALGGGAVAIPFAVAV) are fusion peptide. A heptad repeat 1 (HR1) region spans residues 1037-1156 (IPFAVAVQAR…HVDRLITGRL (120 aa)). Coiled coils occupy residues 1104–1148 (QDVV…DAHV) and 1338–1380 (TYLN…LEWL). A heptad repeat 2 (HR2) region spans residues 1305–1402 (PDYIDINQTV…VWLLIGLVVI (98 aa)). Residues 1391–1410 (WYVWLLIGLVVIFCIPLLLF) traverse the membrane as a helical segment. Residues 1411 to 1449 (CCCSTGCCGCIGCLGSCCHSICSRRQFENYEPIEKVHIH) are Intravirion-facing. A KxHxx motif is present at residues 1445–1449 (KVHIH).

It belongs to the alphacoronaviruses spike protein family. Homotrimer. During virus morphogenesis, found in a complex with M and HE proteins. Interacts with host ANPEP.

The protein resides in the virion membrane. The protein localises to the host endoplasmic reticulum-Golgi intermediate compartment membrane. Functionally, S1 region attaches the virion to the cell membrane by interacting with host ANPEP/aminopeptidase N, initiating the infection. Binding to the receptor probably induces conformational changes in the S glycoprotein unmasking the fusion peptide of S2 region and activating membranes fusion. S2 region belongs to the class I viral fusion protein. Under the current model, the protein has at least 3 conformational states: pre-fusion native state, pre-hairpin intermediate state, and post-fusion hairpin state. During viral and target cell membrane fusion, the coiled coil regions (heptad repeats) regions assume a trimer-of-hairpins structure, positioning the fusion peptide in close proximity to the C-terminal region of the ectodomain. The formation of this structure appears to drive apposition and subsequent fusion of viral and target cell membranes. The protein is Spike glycoprotein of Porcine transmissible gastroenteritis coronavirus (strain FS772/70) (TGEV).